A 286-amino-acid chain; its full sequence is Bark agglutinin I polypeptide B (286 aa).

A signal peptide spans 1-31; sequence MASYKFKTQNSFLLLLSISFFFLLLLNKVNS. A glycan (N-linked (GlcNAc...) asparagine) is linked at Asn-148. 2 residues coordinate Mn(2+): Glu-157 and Asp-159. Ca(2+) contacts are provided by Asp-159, Asn-163, and Asp-167. 2 residues coordinate Mn(2+): Asp-167 and His-172.

It belongs to the leguminous lectin family. In terms of assembly, RPbAI is composed of two polypeptides, A and B, that associate into five different tetrameric isolectins. The A4 combination is the only one devoid of agglutination activity. Isoform B4 displays maximal agglutination activity. In terms of tissue distribution, mostly in the axial and ray parenchymal cells of the inner bark. Fewer in the axial and ray parenchymal cells of the xylem. Strong expression in bark. The lectin accumulates in the inner bark in autumn and winter and disappears in may.

Functionally, bark lectins are storage proteins that probably maintain stocks of nitrogen during dormant period. Self-aggregatable molecules that can bind their own carbohydrate side chains. They could also play a role in the plant's defense against phytophagous invertebrates or herbivorous higher animals. This chain is Bark agglutinin I polypeptide B, found in Robinia pseudoacacia (Black locust).